A 258-amino-acid chain; its full sequence is Small ribosomal subunit protein mS23 (258 aa).

This sequence belongs to the mitochondrion-specific ribosomal protein mS23 family. As to quaternary structure, component of the mitochondrial small ribosomal subunit.

The protein resides in the mitochondrion. In Aspergillus fumigatus (strain ATCC MYA-4609 / CBS 101355 / FGSC A1100 / Af293) (Neosartorya fumigata), this protein is Small ribosomal subunit protein mS23 (rsm25).